We begin with the raw amino-acid sequence, 745 residues long: Phosphoribosylformylglycinamidine synthase subunit PurL (745 aa).

Residue histidine 50 is part of the active site. The ATP site is built by tyrosine 53 and lysine 92. A Mg(2+)-binding site is contributed by glutamate 94. Substrate-binding positions include 95–98 (SHNH) and arginine 117. The active-site Proton acceptor is histidine 96. Mg(2+) is bound at residue aspartate 118. Position 241 (glutamine 241) interacts with substrate. Aspartate 269 serves as a coordination point for Mg(2+). Substrate is bound at residue 313-315 (ESQ). ATP is bound by residues aspartate 495 and glycine 532. A Mg(2+)-binding site is contributed by asparagine 533. Residue serine 535 participates in substrate binding.

Belongs to the FGAMS family. As to quaternary structure, monomer. Part of the FGAM synthase complex composed of 1 PurL, 1 PurQ and 2 PurS subunits.

It localises to the cytoplasm. It catalyses the reaction N(2)-formyl-N(1)-(5-phospho-beta-D-ribosyl)glycinamide + L-glutamine + ATP + H2O = 2-formamido-N(1)-(5-O-phospho-beta-D-ribosyl)acetamidine + L-glutamate + ADP + phosphate + H(+). It functions in the pathway purine metabolism; IMP biosynthesis via de novo pathway; 5-amino-1-(5-phospho-D-ribosyl)imidazole from N(2)-formyl-N(1)-(5-phospho-D-ribosyl)glycinamide: step 1/2. Part of the phosphoribosylformylglycinamidine synthase complex involved in the purines biosynthetic pathway. Catalyzes the ATP-dependent conversion of formylglycinamide ribonucleotide (FGAR) and glutamine to yield formylglycinamidine ribonucleotide (FGAM) and glutamate. The FGAM synthase complex is composed of three subunits. PurQ produces an ammonia molecule by converting glutamine to glutamate. PurL transfers the ammonia molecule to FGAR to form FGAM in an ATP-dependent manner. PurS interacts with PurQ and PurL and is thought to assist in the transfer of the ammonia molecule from PurQ to PurL. This Allorhizobium ampelinum (strain ATCC BAA-846 / DSM 112012 / S4) (Agrobacterium vitis (strain S4)) protein is Phosphoribosylformylglycinamidine synthase subunit PurL.